We begin with the raw amino-acid sequence, 97 residues long: Co-chaperonin GroES (97 aa).

It belongs to the GroES chaperonin family. As to quaternary structure, heptamer of 7 subunits arranged in a ring. Interacts with the chaperonin GroEL.

The protein localises to the cytoplasm. Its function is as follows. Together with the chaperonin GroEL, plays an essential role in assisting protein folding. The GroEL-GroES system forms a nano-cage that allows encapsulation of the non-native substrate proteins and provides a physical environment optimized to promote and accelerate protein folding. GroES binds to the apical surface of the GroEL ring, thereby capping the opening of the GroEL channel. The protein is Co-chaperonin GroES of Yersinia enterocolitica serotype O:8 / biotype 1B (strain NCTC 13174 / 8081).